Reading from the N-terminus, the 379-residue chain is Chaperone protein DnaJ (379 aa).

Residues 5 to 69 (DYYEVLGISK…NKRASYDQFG (65 aa)) enclose the J domain. A CR-type zinc finger spans residues 136 to 218 (GTTKEISIRK…CHGKGTENKT (83 aa)). Zn(2+) is bound by residues Cys149, Cys152, Cys166, Cys169, Cys192, Cys195, Cys206, and Cys209. CXXCXGXG motif repeat units lie at residues 149 to 156 (CETCHGDG), 166 to 173 (CSYCNGAG), 192 to 199 (CPKCNGSG), and 206 to 213 (CPTCHGKG).

This sequence belongs to the DnaJ family. In terms of assembly, homodimer. It depends on Zn(2+) as a cofactor.

The protein resides in the cytoplasm. In terms of biological role, participates actively in the response to hyperosmotic and heat shock by preventing the aggregation of stress-denatured proteins and by disaggregating proteins, also in an autonomous, DnaK-independent fashion. Unfolded proteins bind initially to DnaJ; upon interaction with the DnaJ-bound protein, DnaK hydrolyzes its bound ATP, resulting in the formation of a stable complex. GrpE releases ADP from DnaK; ATP binding to DnaK triggers the release of the substrate protein, thus completing the reaction cycle. Several rounds of ATP-dependent interactions between DnaJ, DnaK and GrpE are required for fully efficient folding. Also involved, together with DnaK and GrpE, in the DNA replication of plasmids through activation of initiation proteins. This Staphylococcus aureus (strain USA300 / TCH1516) protein is Chaperone protein DnaJ.